The sequence spans 506 residues: MEDHQHVPIDIQTSKLLDWLVDRRHCSLKWQSLVLTIREKINAAIQDMPESEEIAQLLSGSYIHYFHCLRILDLLKGTEASTKNIFGRYSSQRMKDWQEIIALYEKDNTYLVELSSLLVRNVNYEIPSLKKQIAKCQQLQQEYSRKEEECQAGAAEMREQFYHSCKQYGITGENVRGELLALVKDLPSQLAEIGAAAQQSLGEAIDVYQASVGFVCESPTEQVLPMLRFVQKRGNSTVYEWRTGTEPSVVERPHLEELPEQVAEDAIDWGDFGVEAVSEGTDSGISAEAAGIDWGIFPESDSKDPGGDGIDWGDDAVALQITVLEAGTQAPEGVARGPDALTLLEYTETRNQFLDELMELEIFLAQRAVELSEEADVLSVSQFQLAPAILQGQTKEKMVTMVSVLEDLIGKLTSLQLQHLFMILASPRYVDRVTEFLQQKLKQSQLLALKKELMVQKQQEALEEQAALEPKLDLLLEKTKELQKLIEADISKRYSGRPVNLMGTSL.

Short sequence motifs (shuffled ATG8-binding motif) lie at residues 267 to 270, 292 to 295, and 310 to 313; these read IDWG. The segment at 269–506 is required for interaction with UFL1 and mediates interaction with CHEK1; the sequence is WGDFGVEAVS…RPVNLMGTSL (238 aa). Residues 355-370 are RPL10a-binding domain (RBD); sequence DELMELEIFLAQRAVE. Residue Lys450 forms a Glycyl lysine isopeptide (Lys-Gly) (interchain with G-Cter in SUMO2) linkage.

The protein belongs to the CDK5RAP3 family. As to quaternary structure, substrate adapter component of the UFM1 ribosome E3 ligase (UREL) complex, composed of UFL1, DDRGK1 and CDK5RAP3. Interaction with UFL1 anchors CDK5RAP3 in the cytoplasm, preventing its translocation to the nucleus which allows expression of the CCND1 cyclin and progression of cells through the G1/S transition. Interacts with ATG8 family proteins MAP1LC3A, MAP1LC3B, GABARAP, GABARAPL1 and GABARAPL2. Interacts with CDK5R1; competes with CDK5RAP1 and CDK5RAP2. Interacts with RELA. Interacts with CHEK1; may negatively regulate CHEK1 and thereby stimulate entry into mitosis. Interacts with CDKN2A/ARF and MDM2; forms a ternary complex involved in regulation of p53/TP53. Interacts with MAPK14. Interacts with CCNB1. Interacts with TUBG1; may regulate CDK5RAP3 in mitotic G2/M transition checkpoint. (Microbial infection) Interacts with hepatitis B virus large envelope protein mutant pre-s2; promotes mitotic entry. Post-translationally, may be phosphorylated by CDK5. In terms of processing, ubiquitinated. Probably triggers proteasomal degradation and is negatively regulated by UFL1. May be ufmylated. Post-translationally, cleaved by caspases early during apoptosis, the resulting peptides may play a role in rupture of the nuclear envelope. In terms of tissue distribution, ubiquitously expressed. Expressed in heart, brain, placenta, lung, liver, skeletal muscle, kidney and pancreas. Isoform 3 is expressed in kidney, liver, skeletal muscle and placenta.

It is found in the endoplasmic reticulum membrane. It localises to the cytoplasm. Its subcellular location is the nucleus. The protein resides in the cytoskeleton. The protein localises to the microtubule organizing center. It is found in the centrosome. Substrate adapter of E3 ligase complexes mediating ufmylation, the covalent attachment of the ubiquitin-like modifier UFM1 to substrate proteins, and which is involved in various processes, such as ribosome recycling and reticulophagy (also called ER-phagy). As part of the UREL complex, plays a key role in ribosome recycling by promoting mono-ufmylation of RPL26/uL24 subunit of the 60S ribosome. Ufmylation of RPL26/uL24 occurs on free 60S ribosomes following ribosome dissociation: it weakens the junction between post-termination 60S subunits and SEC61 translocons, promoting release and recycling of the large ribosomal subunit from the endoplasmic reticulum membrane. Ufmylation of RPL26/uL24 and subsequent 60S ribosome recycling either take place after normal termination of translation or after ribosome stalling during cotranslational translocation at the endoplasmic reticulum. Within the UREL complex, CDK5RAP3 acts as a substrate adapter that constrains UFL1 ligase activity to mono-ufmylate RPL26/uL24 at 'Lys-134'. The UREL complex is also involved in reticulophagy in response to endoplasmic reticulum stress by promoting ufmylation of proteins such as CYB5R3, thereby promoting lysosomal degradation of ufmylated proteins. Also acts as a regulator of transcription: negatively regulates NF-kappa-B-mediated gene transcription through the control of RELA phosphorylation. Also regulates mitotic G2/M transition checkpoint and mitotic G2 DNA damage checkpoint. Through its interaction with CDKN2A/ARF and MDM2 may induce MDM2-dependent p53/TP53 ubiquitination, stabilization and activation in the nucleus, thereby promoting G1 cell cycle arrest and inhibition of cell proliferation. May also play a role in the rupture of the nuclear envelope during apoptosis. May regulate MAPK14 activity by regulating its dephosphorylation by PPM1D/WIP1. Required for liver development. Its function is as follows. (Microbial infection) May be negatively regulated by hepatitis B virus large envelope protein mutant pre-s2 to promote mitotic entry. The protein is CDK5 regulatory subunit-associated protein 3 of Homo sapiens (Human).